A 329-amino-acid polypeptide reads, in one-letter code: Serpentine receptor class alpha-4 (329 aa).

The next 6 helical transmembrane spans lie at 25–45, 103–123, 144–164, 188–208, 238–258, and 273–293; these read IIVLIPVFITFIFTYYAIKVV, LYLEVFVSGVAGMVYGQTGLL, GLAISVSVLCLSFITSRLIIW, YFQSICTLLALFNLVTSILIW, ICFLTFVQFIFFLVYSLGFFI, and LVAVWLYTPPYIAASFPILIF.

It belongs to the nematode receptor-like protein sra family.

The protein localises to the membrane. This is Serpentine receptor class alpha-4 (sra-4) from Caenorhabditis elegans.